The primary structure comprises 540 residues: Glucose-6-phosphate isomerase (540 aa).

Glutamate 346 (proton donor) is an active-site residue. Residues histidine 377 and lysine 505 contribute to the active site.

This sequence belongs to the GPI family.

It localises to the cytoplasm. It carries out the reaction alpha-D-glucose 6-phosphate = beta-D-fructose 6-phosphate. The protein operates within carbohydrate biosynthesis; gluconeogenesis. Its pathway is carbohydrate degradation; glycolysis; D-glyceraldehyde 3-phosphate and glycerone phosphate from D-glucose: step 2/4. Catalyzes the reversible isomerization of glucose-6-phosphate to fructose-6-phosphate. This is Glucose-6-phosphate isomerase from Francisella tularensis subsp. tularensis (strain WY96-3418).